A 144-amino-acid chain; its full sequence is Cell division protein SepF (144 aa).

Positions 21–38 are enriched in polar residues; sequence TDLQGTKTTDEVSPTSRP. Residues 21–40 are disordered; that stretch reads TDLQGTKTTDEVSPTSRPDN.

The protein belongs to the SepF family. As to quaternary structure, homodimer. Interacts with FtsZ.

The protein resides in the cytoplasm. Cell division protein that is part of the divisome complex and is recruited early to the Z-ring. Probably stimulates Z-ring formation, perhaps through the cross-linking of FtsZ protofilaments. Its function overlaps with FtsA. The sequence is that of Cell division protein SepF from Latilactobacillus sakei subsp. sakei (strain 23K) (Lactobacillus sakei subsp. sakei).